Consider the following 377-residue polypeptide: Spermidine/putrescine import ATP-binding protein PotA (377 aa).

The ABC transporter domain occupies 18–248; it reads IRLSGISKSF…PKNLFVARFI (231 aa). 50–57 lines the ATP pocket; sequence GPSGCGKT.

Belongs to the ABC transporter superfamily. Spermidine/putrescine importer (TC 3.A.1.11.1) family. As to quaternary structure, the complex is composed of two ATP-binding proteins (PotA), two transmembrane proteins (PotB and PotC) and a solute-binding protein (PotD).

The protein localises to the cell inner membrane. It carries out the reaction ATP + H2O + polyamine-[polyamine-binding protein]Side 1 = ADP + phosphate + polyamineSide 2 + [polyamine-binding protein]Side 1.. Functionally, part of the ABC transporter complex PotABCD involved in spermidine/putrescine import. Responsible for energy coupling to the transport system. This is Spermidine/putrescine import ATP-binding protein PotA from Vibrio vulnificus (strain CMCP6).